The sequence spans 469 residues: Cytosolic beta-glucosidase (469 aa).

The substrate site is built by glutamine 17, histidine 120, and asparagine 164. Glutamate 165 functions as the Proton donor in the catalytic mechanism. A substrate-binding site is contributed by tyrosine 309. The Nucleophile role is filled by glutamate 373. Residues tryptophan 417 and 424–425 (EW) contribute to the substrate site.

This sequence belongs to the glycosyl hydrolase 1 family. Klotho subfamily. Post-translationally, the N-terminus is blocked. In terms of tissue distribution, present in hepatocytes (at protein level).

The protein resides in the cytoplasm. It localises to the cytosol. The enzyme catalyses Hydrolysis of terminal, non-reducing beta-D-glucosyl residues with release of beta-D-glucose.. The catalysed reaction is a beta-D-glucosyl-(1&lt;-&gt;1')-N-acylsphing-4-enine + H2O = an N-acylsphing-4-enine + D-glucose. It catalyses the reaction a beta-D-galactosyl-(1&lt;-&gt;1')-N-acylsphing-4-enine + H2O = an N-acylsphing-4-enine + D-galactose. It carries out the reaction beta-D-glucosyl-(1&lt;-&gt;1)-sphing-4-enine + H2O = sphing-4-enine + D-glucose. The enzyme catalyses beta-D-glucosyl-(1&lt;-&gt;1)-N-octadecanoylsphing-4-enine + H2O = N-octadecanoylsphing-4-enine + D-glucose. The catalysed reaction is beta-D-galactosyl-(1&lt;-&gt;1)-sphing-4-enine + H2O = sphing-4-enine + D-galactose. It catalyses the reaction beta-D-galactosyl-(1&lt;-&gt;1')-N-octadecanoylsphing-4-enine + H2O = N-octadecanoylsphing-4-enine + D-galactose. It carries out the reaction a beta-D-xylosyl-(1&lt;-&gt;1')-N-acylsphing-4-enine + cholesterol = cholesteryl 3-beta-D-xyloside + an N-acylsphing-4-enine. With respect to regulation, inhibited by 2,4-dinitrophenyl-2-fluoro-2-deoxy-beta-D-glucopyranoside. Neutral cytosolic beta-glycosidase with a broad substrate specificity that could play a role in the catabolism of glycosylceramides. Has a significant glucosylceramidase activity in vitro. However, that activity is relatively low and its significance in vivo is not clear. Hydrolyzes galactosylceramide/GalCer, glucosylsphingosine/GlcSph and galactosylsphingosine/GalSph. However, the in vivo relevance of these activities is unclear. It can also hydrolyze a broad variety of dietary glycosides including phytoestrogens, flavonols, flavones, flavanones and cyanogens in vitro and could therefore play a role in the metabolism of xenobiotics. Possesses transxylosylase activity in vitro using xylosylated ceramides/XylCers (such as beta-D-xylosyl-(1&lt;-&gt;1')-N-acylsphing-4-enine) as xylosyl donors and cholesterol as acceptor. Could also play a role in the catabolism of cytosolic sialyl free N-glycans. This is Cytosolic beta-glucosidase from Cavia porcellus (Guinea pig).